The sequence spans 85 residues: LYR motif-containing protein 5A (85 aa).

Belongs to the complex I LYR family.

This Danio rerio (Zebrafish) protein is LYR motif-containing protein 5A (lyrm5a).